We begin with the raw amino-acid sequence, 140 residues long: uncharacterized protein (140 aa).

This is an uncharacterized protein from Synechococcus sp. (strain WH8020).